We begin with the raw amino-acid sequence, 137 residues long: Large ribosomal subunit protein uL16 (137 aa).

The protein belongs to the universal ribosomal protein uL16 family. In terms of assembly, part of the 50S ribosomal subunit.

Its function is as follows. Binds 23S rRNA and is also seen to make contacts with the A and possibly P site tRNAs. This chain is Large ribosomal subunit protein uL16, found in Mycoplasma mycoides subsp. mycoides SC (strain CCUG 32753 / NCTC 10114 / PG1).